Consider the following 285-residue polypeptide: Tropomyosin-2 (285 aa).

Residues 1–277 (MDAIKKKMQA…KDIGDDLDTA (277 aa)) adopt a coiled-coil conformation. The disordered stretch occupies residues 103 to 133 (EERLATATAKLSEASQAADESERARKVLENR). Basic and acidic residues predominate over residues 122-133 (ESERARKVLENR).

The protein belongs to the tropomyosin family. As to quaternary structure, homodimer.

Tropomyosin, in association with the troponin complex, plays a central role in the calcium dependent regulation of muscle contraction. In Bombyx mori (Silk moth), this protein is Tropomyosin-2.